The following is a 523-amino-acid chain: 2-isopropylmalate synthase (523 aa).

The Pyruvate carboxyltransferase domain occupies 5–267 (VIIFDTTLRD…HTNINHHEIW (263 aa)). Residues D14, H202, H204, and N238 each contribute to the Mn(2+) site. A regulatory domain region spans residues 392-523 (RLDYFSVQSG…QNKENNKETV (132 aa)).

It belongs to the alpha-IPM synthase/homocitrate synthase family. LeuA type 1 subfamily. Homodimer. Mn(2+) is required as a cofactor.

Its subcellular location is the cytoplasm. It catalyses the reaction 3-methyl-2-oxobutanoate + acetyl-CoA + H2O = (2S)-2-isopropylmalate + CoA + H(+). The protein operates within amino-acid biosynthesis; L-leucine biosynthesis; L-leucine from 3-methyl-2-oxobutanoate: step 1/4. In terms of biological role, catalyzes the condensation of the acetyl group of acetyl-CoA with 3-methyl-2-oxobutanoate (2-ketoisovalerate) to form 3-carboxy-3-hydroxy-4-methylpentanoate (2-isopropylmalate). The sequence is that of 2-isopropylmalate synthase from Salmonella paratyphi A (strain ATCC 9150 / SARB42).